The sequence spans 437 residues: MTDTIFAPASGFGRAAVAVIRISGPGAASCLTALTGHPPPLPRRLSLRQLRDPGTGEVLDRALVVWLPGPATFTGEDSAELHLHGGAAVRAAVLRVLGRLPGLAPAEPGAFTRRAFLNGRMDLTAVEGLADLIDAETEAQRRQAMRQLDGALGRLVEAWRDTLLGVLAGAEAALDFSDEGDVDESALSASGLAAAARVRDAILAALAEGRRGERLREGFVVVLAGPPNAGKSTLLNALARREAAIVSPIPGTTRDAIEVRCDLDGLPVLLVDTAGLRDEGADPIEAEGMARSRRRIEEADLVLWLVPPEGGAAAPKGALVVHTKRDLGRDPGGGVDGALAISALTGEGLAMLLDRVAAAAGAALGRGDAVVTRERQRRALEECAAHLGRAIAGAETMPAELVAEDLRLAVRALGAVAGRVGVEEMLDRLFSSFCIGK.

Arg21, Glu80, and Arg120 together coordinate (6S)-5-formyl-5,6,7,8-tetrahydrofolate. The TrmE-type G domain occupies Gly218–Gly361. Residue Asn228 coordinates K(+). Residues Asn228–Thr233, Ser247–Thr253, and Asp272–Gly275 each bind GTP. Ser232 is a Mg(2+) binding site. Residues Ser247, Ile249, and Thr252 each contribute to the K(+) site. Residue Thr253 coordinates Mg(2+). Position 437 (Lys437) interacts with (6S)-5-formyl-5,6,7,8-tetrahydrofolate.

It belongs to the TRAFAC class TrmE-Era-EngA-EngB-Septin-like GTPase superfamily. TrmE GTPase family. Homodimer. Heterotetramer of two MnmE and two MnmG subunits. The cofactor is K(+).

The protein resides in the cytoplasm. Its function is as follows. Exhibits a very high intrinsic GTPase hydrolysis rate. Involved in the addition of a carboxymethylaminomethyl (cmnm) group at the wobble position (U34) of certain tRNAs, forming tRNA-cmnm(5)s(2)U34. This chain is tRNA modification GTPase MnmE, found in Methylobacterium sp. (strain 4-46).